The primary structure comprises 442 residues: Aspartate--tRNA(Asp/Asn) ligase (442 aa).

Glu-172 is an L-aspartate binding site. Positions 194 to 197 (QFYK) are aspartate. Arg-216 contributes to the L-aspartate binding site. Residues 216 to 218 (RAE), 224 to 226 (RHL), and Glu-365 contribute to the ATP site. Mg(2+)-binding residues include Glu-365 and Thr-368. Residues Thr-368 and Arg-372 each contribute to the L-aspartate site. 413–416 (GLER) provides a ligand contact to ATP.

The protein belongs to the class-II aminoacyl-tRNA synthetase family. Type 2 subfamily. As to quaternary structure, homodimer. Requires Mg(2+) as cofactor.

It localises to the cytoplasm. The enzyme catalyses tRNA(Asx) + L-aspartate + ATP = L-aspartyl-tRNA(Asx) + AMP + diphosphate. Its function is as follows. Aspartyl-tRNA synthetase with relaxed tRNA specificity since it is able to aspartylate not only its cognate tRNA(Asp) but also tRNA(Asn). Reaction proceeds in two steps: L-aspartate is first activated by ATP to form Asp-AMP and then transferred to the acceptor end of tRNA(Asp/Asn). This is Aspartate--tRNA(Asp/Asn) ligase (aspS) from Aeropyrum pernix (strain ATCC 700893 / DSM 11879 / JCM 9820 / NBRC 100138 / K1).